Reading from the N-terminus, the 353-residue chain is MFGSVRLVQEVTRSNQQTAANTTSPASVDESIIAQEPSNVSDLTSEPVESTQIKQQGNTEASQDIQQEQQQQQTHIHPQQPALSAQQTQQQPALPCWSTPTQHIPISFSAITSPSVLSSYKSRDFRNLFTTTNSSPNPSSPSPSSMKSHTRKNSKYTVRHHRTRQSSFNGTTNPPAYFSSNSILRKQPPTHHPQRNFLQLQQEQQKSKSQKLLCLWPLPTVTRYMILIALFVSTLNCLHILDLSCSAPSFVVYRFDIKNMILSPFLFNWTLPSMALFGWNVLILGLFEESLAHMVGGTRRFIQLLLVLFTTVSLVRVCLGLIFSKATGYAFPSLFFSNTMHECSQGLCVCCIF.

Polar residues-rich tracts occupy residues 11 to 26 and 36 to 58; these read VTRS…TSPA and EPSN…QQGN. Disordered regions lie at residues 11-96 and 129-174; these read VTRS…ALPC and FTTT…TTNP. 2 stretches are compositionally biased toward low complexity: residues 59-95 and 133-145; these read TEAS…PALP and NSSP…SPSS. Residues 148–164 are compositionally biased toward basic residues; sequence SHTRKNSKYTVRHHRTR. A compositionally biased stretch (polar residues) spans 165–174; it reads QSSFNGTTNP.

The protein resides in the nucleus. Functionally, may be involved in transcriptional activation. The chain is Putative transcription factor MTF1 (MTF1) from Mucor circinelloides f. lusitanicus (Mucor racemosus var. lusitanicus).